Consider the following 1029-residue polypeptide: DNA repair protein RAD5A (1029 aa).

Positions 83–104 (SVGANHRVEEENESVNGGGEES) are disordered. In terms of domain architecture, Helicase ATP-binding spans 406-622 (PSTLQMARGG…YSLLRFLRIE (217 aa)). Residue 419–426 (DAMGLGKT) coordinates ATP. A DEAH box motif is present at residues 573-576 (DEAH). The segment at 794–834 (CPICLEALEDAVLTPCAHRLCRECLLASWRNSTSGLCPVCR) adopts an RING-type zinc-finger fold. The Helicase C-terminal domain occupies 864–1029 (KITALLEELE…RIEELKMLFT (166 aa)).

The protein belongs to the SNF2/RAD54 helicase family. RAD16 subfamily.

It localises to the nucleus. Functions in error-free postreplication DNA repair or DNA-damage tolerance (DTT) pathway. Required for homologous recombination (HR) induced by DNA double-strand break (DSB) in somatic cells. Required for damage-induced DNA repair, independently of MUS81 and RECQL4A. Plays a role in synthesis-dependent strand annealing (SDSA) but not in single-strand annealing (SSA). Possesses double-stranded DNA-dependent ATPase activity. Is able to regress replication forks with preference for forks with a leading strand gap. Is able to catalyze branch migration of Holliday junctions and is unaffected by protein blockades. The protein is DNA repair protein RAD5A of Arabidopsis thaliana (Mouse-ear cress).